The chain runs to 193 residues: Orotate phosphoribosyltransferase (193 aa).

5-phospho-alpha-D-ribose 1-diphosphate is bound at residue 114 to 122 (EDVITTGGS). Residues threonine 118 and arginine 146 each contribute to the orotate site.

It belongs to the purine/pyrimidine phosphoribosyltransferase family. PyrE subfamily. In terms of assembly, homodimer. The cofactor is Mg(2+).

The enzyme catalyses orotidine 5'-phosphate + diphosphate = orotate + 5-phospho-alpha-D-ribose 1-diphosphate. Its pathway is pyrimidine metabolism; UMP biosynthesis via de novo pathway; UMP from orotate: step 1/2. Catalyzes the transfer of a ribosyl phosphate group from 5-phosphoribose 1-diphosphate to orotate, leading to the formation of orotidine monophosphate (OMP). The sequence is that of Orotate phosphoribosyltransferase from Chlorobium phaeobacteroides (strain DSM 266 / SMG 266 / 2430).